A 414-amino-acid chain; its full sequence is MGGAARAVLLGFLQASSSFDVRDSTGKVCIIANLTVAFSVEYKSSGQKQFAHFFLPQNATSQSHSSCGEGNTSHPILALSFGAGHLISLNFSKTLDKYQVEELTFHYNLSDETLFPNATEGKVMVATQKSVIQARIGTEYRCINSKYVRMKHVNITFSNVTLEAYPTNDTFSANKTECREDMVSTTTVAPTTPKHATSQVPTTSPAPTAAPSSPAVGKYNVTGANGTCVLASMGLQLNITYVKKDEKMGLDLLNFIPHNTSASGMCESTSAFLNLAFEKTKITFHFVLNASSEKFFLQGVNVSTTLPSEAKAPTFEASNDSMSESRATVGNSYKCSAEENFQVTDKALVNVFNVQVQAFKVDGDKFGAMEECQLDENNMLIPIIVGAALAGLVLIVLIAYLIGRKRSHAGYQTI.

The first 18 residues, 1 to 18 (MGGAARAVLLGFLQASSS), serve as a signal peptide directing secretion. Residues 19 to 181 (FDVRDSTGKV…SANKTECRED (163 aa)) form a first lumenal domain region. Topologically, residues 19-379 (FDVRDSTGKV…EECQLDENNM (361 aa)) are lumenal. Cys-29 and Cys-67 are oxidised to a cystine. Asn-33, Asn-58, Asn-71, Asn-90, Asn-108, Asn-117, Asn-154, Asn-159, Asn-168, and Asn-174 each carry an N-linked (GlcNAc...) asparagine glycan. Cys-142 and Cys-178 form a disulfide bridge. A hinge region spans residues 182–224 (MVSTTTVAPTTPKHATSQVPTTSPAPTAAPSSPAVGKYNVTGA). Residues 186–213 (TTVAPTTPKHATSQVPTTSPAPTAAPSS) form a disordered region. The segment covering 196-213 (ATSQVPTTSPAPTAAPSS) has biased composition (low complexity). 7 N-linked (GlcNAc...) asparagine glycosylation sites follow: Asn-220, Asn-225, Asn-238, Asn-259, Asn-289, Asn-301, and Asn-319. A second lumenal domain region spans residues 225–379 (NGTCVLASMG…EECQLDENNM (155 aa)). A disulfide bond links Cys-228 and Cys-266. An intrachain disulfide couples Cys-335 to Cys-372. Residues 380–403 (LIPIIVGAALAGLVLIVLIAYLIG) traverse the membrane as a helical segment. The Cytoplasmic segment spans residues 404–414 (RKRSHAGYQTI).

The protein belongs to the LAMP family.

The protein resides in the lysosome membrane. Its subcellular location is the endosome membrane. The protein localises to the late endosome membrane. It localises to the cell membrane. It is found in the cytolytic granule membrane. In terms of biological role, lysosomal membrane glycoprotein which plays an important role in lysosome biogenesis, lysosomal pH regulation, autophagy and cholesterol homeostasis. Its function is as follows. (Microbial infection) Plays an essential role in efficient replication and spread of Marek's disease virus, by facilitating viral cell-to-cell spread. This chain is Lysosome-associated membrane glycoprotein 1 (LAMP1), found in Gallus gallus (Chicken).